The following is a 420-amino-acid chain: Histidine--tRNA ligase (420 aa).

It belongs to the class-II aminoacyl-tRNA synthetase family. In terms of assembly, homodimer.

The protein localises to the cytoplasm. It carries out the reaction tRNA(His) + L-histidine + ATP = L-histidyl-tRNA(His) + AMP + diphosphate + H(+). In Macrococcus caseolyticus (strain JCSC5402) (Macrococcoides caseolyticum), this protein is Histidine--tRNA ligase.